The primary structure comprises 146 residues: Snake venom vascular endothelial growth factor toxin (146 aa).

The first 24 residues, 1-24, serve as a signal peptide directing secretion; that stretch reads MAAYLLAVAILFCIQGWPLGTVQG. Residue glutamine 25 is modified to Pyrrolidone carboxylic acid. 3 disulfide bridges follow: cysteine 38/cysteine 80, cysteine 69/cysteine 115, and cysteine 73/cysteine 117. Residues 118-146 are disordered; that stretch reads RPRSASGVNSRKHKRNPEEGEQRAKFPFV. Positions 133–146 are enriched in basic and acidic residues; the sequence is NPEEGEQRAKFPFV.

The protein belongs to the PDGF/VEGF growth factor family. Snake venom VEGF subfamily. Homodimer; disulfide-linked. Interacts with VEGF receptor-1 (FLT1) with a high affinity, whereas it binds to VEGF receptor-2 (KDR) with a low affinity. Does not bind VEGF receptor-3 (FLT4). In terms of tissue distribution, expressed by the venom gland.

The protein resides in the secreted. Its function is as follows. Snake venom VEGFs that may contribute to venom dispersion and prey subjugation by inducing vascular permeability and hypotension. This protein induces an increase in capillary permeability after intradermal injection, as well as a drastic hypotensive effect after intravenous injection. The hypotension is mediated by nitric oxide (NO), which is produced by VEGF-activated endothelium NO synthase. Also induces angiogenesis in vitro. Like other crotalid VEGFs, this protein interacts with VEGF receptor-1 (FLT1) with a high affinity, whereas it binds to VEGF receptor-2 (KDR) with a low affinity. The chain is Snake venom vascular endothelial growth factor toxin from Bothrops erythromelas (Caatinga lance head).